Reading from the N-terminus, the 752-residue chain is MGPLMVLFCLLFLYPGLADSAPSCPQNVNISGGTFTLSHGWAPGSLLTYSCPQGLYPSPASRLCKSSGQWQTPGATRSLSKAVCKPVRCPAPVSFENGIYTPRLGSYPVGGNVSFECEDGFILRGSPVRHCCPNGMWDGETAVCDNGAGHCPNPGISLGAVRTGFRFGHGDKVRYRCSSNLVLTGSSERECQGNGVWSGTEPICRQPYSYDFPEDVAPALGTSFSHMLGATNPTQKTKESLGRKIQIQRSGHLNLYLLLDCSQSVSENDFLIFKESASLMVDRIFSFEINVSVAIITFASEPRVLMSVLNDNSRDMTEVISSLENANYKDHENGTGTNTYAALNSVYLMMNNQMRLLGMETMAWQEIRHAIILLTDGKSNMGGSPKTAVDHIREILNINQKRNDYLDIYAIGVGKLDVDWRELNELGSKKDGERHAFILQDTKALHQVFEHMLDVSKLTDTICGVGNMSANASDQERTPWHVTIKPKSQETCRGALISDQWVLTAAHCFRDGNDHSLWRVNVGDPKSRWGKEFLIEKAVISPGFDVFAKKNQGILEFYGDDIALLKLAQKVKMSTHARPICLPCTMEANLALRRPQGSTCRDHENELLNKQSVPAHFVALNGSKLNINLKMGVEWTSCAEVVSQEKTMFPNLTDVREVVTDQFLCSGTQEDESPCKGESGGAVFLERRFRFFQVGLVSWGLYNPCLGSADKNSRKRAPRSKVPPPRDFHINLFRMQPWLRQHLGDVLNFLPL.

A signal peptide spans 1 to 20; sequence MGPLMVLFCLLFLYPGLADS. 3 consecutive Sushi domains span residues 22-86, 87-146, and 149-206; these read PSCP…VCKP, VRCP…VCDN, and GHCP…ICRQ. Disulfide bonds link Cys24/Cys64, Cys51/Cys84, Cys89/Cys131, Cys117/Cys144, Cys151/Cys191, and Cys177/Cys204. N-linked (GlcNAc...) asparagine glycosylation occurs at Asn29. Asn112 is a glycosylation site (N-linked (GlcNAc...) asparagine). Residues 254–452 enclose the VWFA domain; that stretch reads NLYLLLDCSQ…KALHQVFEHM (199 aa). The MIDAS-like motif signature appears at 260–264; the sequence is DCSQS. Residues Ser262 and Ser264 each coordinate Mg(2+). N-linked (GlcNAc...) asparagine glycans are attached at residues Asn290 and Asn333. Thr337 contributes to the Mg(2+) binding site. Disulfide bonds link Cys463–Cys581, Cys492–Cys508, and Cys584–Cys600. The Peptidase S1 domain occupies 464 to 744; the sequence is GVGNMSANAS…MQPWLRQHLG (281 aa). Asn467 and Asn471 each carry an N-linked (GlcNAc...) asparagine glycan. Catalysis depends on charge relay system residues His507 and Asp561. 2 N-linked (GlcNAc...) asparagine glycosylation sites follow: Asn621 and Asn651. Cystine bridges form between Cys638–Cys665 and Cys675–Cys705. The active-site Charge relay system is the Ser679.

Belongs to the peptidase S1 family. In terms of assembly, serine protease component of the C3 convertase, also named C4bC2b, composed of the serine protease complement C2b and complement C4b. Serine protease component of the C5 convertase, also named C4bC2bC3b, composed of the serine protease complement C2b, complement C3b, as well as complement C4b. The cofactor is Mg(2+). Mn(2+) serves as cofactor. In terms of processing, cleaved and activated by different proteases depending on the complement pathway to generate complement C2a and serine protease complement C2b chains. Cleaved and activated by C1S following activation by the classical complement system. Cleaved and activated by MASP2 following activation by the lectin complement system. Cleaved and activated by GZMK following activation by the GZMK complement system.

The protein localises to the secreted. The protein resides in the cell surface. The catalysed reaction is Selective cleavage of Arg-|-Ser bond in complement component C3 alpha-chain to form C3a and C3b, and Arg-|-Xaa bond in complement component C5 alpha-chain to form C5a and C5b.. Precursor of the catalytic component of the C3 and C5 convertase complexes, which are part of the complement pathway, a cascade of proteins that leads to phagocytosis and breakdown of pathogens and signaling that strengthens the adaptive immune system. Component C2 is part of the classical, lectin and GZMK complement systems. Its function is as follows. Catalytic component of the complement C3 and C5 convertase complexes. Following complement activation, recruited to the surface of pathogens by complement C4b opsonin to form the C3 convertase, or C3b and C4b opsonins to form the C5 convertase. As part of the C3 convertase, cleaves and activate C3 into C3a anaphylatoxin and C3b opsonin, the next components of the complement pathways. As part of the C5 convertase, cleaves and activate C5 into C5a anaphylatoxin and C5b component of the membrane attack complex. This Pan troglodytes (Chimpanzee) protein is Complement C2.